The following is a 642-amino-acid chain: Zinc finger protein 14 (642 aa).

A KRAB domain is found at 4–76 (VSFEDVAVNF…MVERLCESRK (73 aa)). Positions 77–99 (GSKCGETTSQMPNVNINKETSTG) are disordered. A compositionally biased stretch (polar residues) spans 81 to 99 (GETTSQMPNVNINKETSTG). The C2H2-type 1 zinc finger occupies 103–125 (HECSFCGKDFMHHSSLNRHMRSH). The C2H2-type 2; degenerate zinc-finger motif lies at 141 to 163 (CKRKAVGKTFSYRHCVRKHERTH). A C2H2-type 3 zinc finger spans residues 169 to 191 (YECKQCGKAFIYYQPFQRHERIH). The segment at 197–217 (YECKQCGKTFIYYQSFQKHAH) adopts a C2H2-type 4; atypical zinc-finger fold. 15 consecutive C2H2-type zinc fingers follow at residues 223-245 (YECK…ERTH), 251-273 (YECK…ERTH), 279-301 (YKCK…KRTH), 307-329 (YECK…VITH), 335-357 (YKCK…ERTH), 363-385 (YECK…ERTH), 391-413 (YECK…ETTH), 419-441 (YECK…ERTH), 447-469 (YECK…ERSH), 475-497 (YECK…ERTH), 503-525 (YECK…EKIH), 531-553 (FECK…ERTH), 559-581 (YQCK…ERTH), 587-609 (YRCK…ERSH), and 615-637 (YECK…ERTH).

Belongs to the krueppel C2H2-type zinc-finger protein family.

It localises to the nucleus. Its function is as follows. May be involved in transcriptional regulation. The protein is Zinc finger protein 14 (ZNF14) of Macaca fascicularis (Crab-eating macaque).